The chain runs to 148 residues: SsrA-binding protein (148 aa).

Belongs to the SmpB family.

It is found in the cytoplasm. Its function is as follows. Required for rescue of stalled ribosomes mediated by trans-translation. Binds to transfer-messenger RNA (tmRNA), required for stable association of tmRNA with ribosomes. tmRNA and SmpB together mimic tRNA shape, replacing the anticodon stem-loop with SmpB. tmRNA is encoded by the ssrA gene; the 2 termini fold to resemble tRNA(Ala) and it encodes a 'tag peptide', a short internal open reading frame. During trans-translation Ala-aminoacylated tmRNA acts like a tRNA, entering the A-site of stalled ribosomes, displacing the stalled mRNA. The ribosome then switches to translate the ORF on the tmRNA; the nascent peptide is terminated with the 'tag peptide' encoded by the tmRNA and targeted for degradation. The ribosome is freed to recommence translation, which seems to be the essential function of trans-translation. The protein is SsrA-binding protein of Ehrlichia ruminantium (strain Welgevonden).